A 465-amino-acid polypeptide reads, in one-letter code: Cysteine--tRNA ligase (465 aa).

Cys-30 serves as a coordination point for Zn(2+). Residues 32 to 42 (PTVYDRAHLGN) carry the 'HIGH' region motif. 3 residues coordinate Zn(2+): Cys-213, His-238, and Glu-242. Residues 271–275 (KMSKS) carry the 'KMSKS' region motif. Lys-274 contributes to the ATP binding site.

Belongs to the class-I aminoacyl-tRNA synthetase family. In terms of assembly, monomer. The cofactor is Zn(2+).

It localises to the cytoplasm. It catalyses the reaction tRNA(Cys) + L-cysteine + ATP = L-cysteinyl-tRNA(Cys) + AMP + diphosphate. The sequence is that of Cysteine--tRNA ligase from Ruegeria pomeroyi (strain ATCC 700808 / DSM 15171 / DSS-3) (Silicibacter pomeroyi).